The following is a 182-amino-acid chain: UPF0397 protein BA_2640/GBAA_2640/BAS2460 (182 aa).

5 helical membrane passes run 9–29, 40–60, 71–91, 114–134, and 142–162; these read VVAI…GFSI, AILT…IGLI, WSIW…MGFI, ITGL…DIIV, and IVIQ…VLGL.

The protein belongs to the UPF0397 family.

The protein localises to the cell membrane. This Bacillus anthracis protein is UPF0397 protein BA_2640/GBAA_2640/BAS2460.